The sequence spans 680 residues: Methionine--tRNA ligase (680 aa).

The 'HIGH' region motif lies at 15-25; it reads PYANGPVHIGH. Residues C147, C150, C160, and C163 each coordinate Zn(2+). Positions 332–336 match the 'KMSKS' region motif; the sequence is KISTS. T335 serves as a coordination point for ATP. Residues 579-680 form the tRNA-binding domain; the sequence is DFLKLDIRVG…AEVAPGSQVK (102 aa).

Belongs to the class-I aminoacyl-tRNA synthetase family. MetG type 1 subfamily. In terms of assembly, homodimer. The cofactor is Zn(2+).

The protein resides in the cytoplasm. The enzyme catalyses tRNA(Met) + L-methionine + ATP = L-methionyl-tRNA(Met) + AMP + diphosphate. Functionally, is required not only for elongation of protein synthesis but also for the initiation of all mRNA translation through initiator tRNA(fMet) aminoacylation. This Porphyromonas gingivalis (strain ATCC 33277 / DSM 20709 / CIP 103683 / JCM 12257 / NCTC 11834 / 2561) protein is Methionine--tRNA ligase.